Here is a 549-residue protein sequence, read N- to C-terminus: Glucose-6-phosphate isomerase (549 aa).

Glu355 (proton donor) is an active-site residue. Catalysis depends on residues His386 and Lys514.

It belongs to the GPI family.

The protein localises to the cytoplasm. The enzyme catalyses alpha-D-glucose 6-phosphate = beta-D-fructose 6-phosphate. Its pathway is carbohydrate biosynthesis; gluconeogenesis. It functions in the pathway carbohydrate degradation; glycolysis; D-glyceraldehyde 3-phosphate and glycerone phosphate from D-glucose: step 2/4. Functionally, catalyzes the reversible isomerization of glucose-6-phosphate to fructose-6-phosphate. The chain is Glucose-6-phosphate isomerase from Buchnera aphidicola subsp. Acyrthosiphon pisum (strain APS) (Acyrthosiphon pisum symbiotic bacterium).